Reading from the N-terminus, the 502-residue chain is MSKDFILAVDQGTTSSRAIIFDKKGNIRKIAQKEFTQIYPKSGWVEHDAMEIWGTQSGVMREALEFGRVKPDQIAAIGITNQRETVVVWDKETGDPVYNAIVWQCRRTSSICDEIKRDPQFVKYIKENTGLVVDAYFSGTKVKWILDNVEGAREKANAGKLLMGTIDTWLIWNLTRGKVHATDYSNASRTMLFNINSLEWDKKILDYLNIPESMLPEVKNSSEVFGVTDSHTLGGAEIPIAGVAGDQHAALFGHCCFEKGMAKNTYGTGCFALMNVGDKPVYSDEGLLTTIAWAENGKPTYALEGSVFIAGAVIQWIRDGLGLVRSAEDSEYYATKIDSTNGVYLVPAFVGLGTPYWDMYARGTIVGITRDTKREHIIRAALEAIAYQAKDVLECMKEDTGLDLAGLRVDGGAVQNNFLMQFQSDILQSEISKPKVNEITGLGAVFLAGLAVGFWKDKQELKSILTTEKVFEPQKDSQAVAHDYRGWKKAVERSKAWAECYS.

Threonine 13 contacts ADP. ATP-binding residues include threonine 13, threonine 14, and serine 15. Threonine 13 provides a ligand contact to sn-glycerol 3-phosphate. Position 17 (arginine 17) interacts with ADP. 4 residues coordinate sn-glycerol 3-phosphate: arginine 83, glutamate 84, tyrosine 136, and aspartate 246. The glycerol site is built by arginine 83, glutamate 84, tyrosine 136, aspartate 246, and glutamine 247. Residues threonine 268 and glycine 311 each contribute to the ADP site. ATP contacts are provided by threonine 268, glycine 311, glutamine 315, and glycine 412. Positions 412 and 416 each coordinate ADP.

The protein belongs to the FGGY kinase family.

It carries out the reaction glycerol + ATP = sn-glycerol 3-phosphate + ADP + H(+). It functions in the pathway polyol metabolism; glycerol degradation via glycerol kinase pathway; sn-glycerol 3-phosphate from glycerol: step 1/1. With respect to regulation, inhibited by fructose 1,6-bisphosphate (FBP). In terms of biological role, key enzyme in the regulation of glycerol uptake and metabolism. Catalyzes the phosphorylation of glycerol to yield sn-glycerol 3-phosphate. The sequence is that of Glycerol kinase from Francisella tularensis subsp. tularensis (strain FSC 198).